The chain runs to 235 residues: MVQQKERETFSQRLALACDKAGLPLHGRQADLAVRLKVTPKAISKWFNGESIPRKDKMESLASVLGTTAAYLHGYADDDGITVNHLSRSNDYYRVDVLDVQASAGPGTMVSNEFIEKIRAIEYTTEQARILFNGRPQESVKVITVRGDSMEGTINPGDEIFVDVSITCFDGDGIYVFVYGKTMHVKRLQMQKNRLAVISDNAAYDRWYIEEGEEEQLHILAKVLIRQSIDYKRFG.

The 59-residue stretch at 14-72 (LALACDKAGLPLHGRQADLAVRLKVTPKAISKWFNGESIPRKDKMESLASVLGTTAAYL) folds into the HTH cro/C1-type domain. Residues 25–44 (LHGRQADLAVRLKVTPKAIS) constitute a DNA-binding region (H-T-H motif).

The polypeptide is 26 kDa repressor protein (CI-HTT) (Escherichia phage HK022 (Bacteriophage HK022)).